A 108-amino-acid polypeptide reads, in one-letter code: MTTQANVRMTVGTLLGTVNEAATTVADTFGTATKAVGMLNRYVTKQADKQIIRDKLEMHEFTNKLIEETAMQEAIRQKQILDFCKDEQNKELFSNAYDRLSKILADSK.

This is an uncharacterized protein from Escherichia coli (Bacteriophage N4).